The chain runs to 359 residues: 24-methylenesterol C-methyltransferase 3 (359 aa).

Residues 4 to 24 (VALYCTAGLIAGAVYWFICVL) traverse the membrane as a helical segment.

It belongs to the class I-like SAM-binding methyltransferase superfamily. Erg6/SMT family.

It localises to the membrane. It carries out the reaction 24-methylidenelophenol + S-adenosyl-L-methionine = (Z)-24-ethylidenelophenol + S-adenosyl-L-homocysteine + H(+). It functions in the pathway steroid biosynthesis; sterol biosynthesis. In terms of biological role, catalyzes the methyl transfer from S-adenosyl-methionine to the methylene group of 24-methylene lophenol to form 24-ethylidene lophenol. The chain is 24-methylenesterol C-methyltransferase 3 (SMT3) from Arabidopsis thaliana (Mouse-ear cress).